The sequence spans 368 residues: MNTFGRELRITTFGESHGRAIGVVIDGVPAGLPLTEEDIRKELDRRMFCHIHWLNPRCEPEEFEILSGVKDGHTQGTPIAIVIWNKKAISSYYDELWMKPRPGHADLAYYLKYGKFYDHRGGGRASGRTTAAIVAAGAVAKKLLALVGAEVAGHIVELGGVEVKRPYTFEDVKKSWEKPLPVVDDDALAAMLEVLRKNAAEGDSVGGGVEIWAVGVPQGLGEPHFGKIRADLAHAAFSVPAVVALDWGAGRQLAKMRGSEANDPIVVKGGKPGLETNKIGGVLGGITIGEPLYFRVWLKPTPSVRKPQRTVDLAKMEPATLQFKGRYDVSVVPKALVALEAMTAITLADHLLRAGVIRRDRPLKDPVV.

Arg46 serves as a coordination point for NADP(+). FMN is bound by residues 124-126 (RAS), Gly284, 299-303 (KPTPS), and Arg326.

Belongs to the chorismate synthase family. The cofactor is FMNH2.

The enzyme catalyses 5-O-(1-carboxyvinyl)-3-phosphoshikimate = chorismate + phosphate. It participates in metabolic intermediate biosynthesis; chorismate biosynthesis; chorismate from D-erythrose 4-phosphate and phosphoenolpyruvate: step 7/7. Functionally, catalyzes the anti-1,4-elimination of the C-3 phosphate and the C-6 proR hydrogen from 5-enolpyruvylshikimate-3-phosphate (EPSP) to yield chorismate, which is the branch point compound that serves as the starting substrate for the three terminal pathways of aromatic amino acid biosynthesis. This reaction introduces a second double bond into the aromatic ring system. The protein is Chorismate synthase of Pyrobaculum arsenaticum (strain DSM 13514 / JCM 11321 / PZ6).